A 579-amino-acid chain; its full sequence is Membrane frizzled-related protein (579 aa).

At 1-69 (MKDFSDVILC…RPDCRFSWLC (69 aa)) the chain is on the cytoplasmic side. The helical; Signal-anchor for type II membrane protein transmembrane segment at 70-90 (VLLLSSLLLLLLGLLVAIILA) threads the bilayer. Topologically, residues 91 to 579 (QLQAAPPSGA…AADLEACAQP (489 aa)) are extracellular. The segment at 100 to 143 (ASHSPLPAGGLTTTTTTPTITTSQAAGTPKGQQESGVSPSPQST) is disordered. Residues 111–121 (TTTTTTPTITT) are compositionally biased toward low complexity. Positions 122-143 (SQAAGTPKGQQESGVSPSPQST) are enriched in polar residues. Intrachain disulfides connect Cys-144-Cys-170 and Cys-197-Cys-216. The CUB 1 domain occupies 144-253 (CGGLLSGPRG…FGFHAWYQAM (110 aa)). Asn-227 is a glycosylation site (N-linked (GlcNAc...) asparagine). The 37-residue stretch at 259 to 295 (SCAHDEFRCDQLICLLPDSVCDGFANCADGSDETNCS) folds into the LDL-receptor class A 1 domain. 5 disulfide bridges follow: Cys-260-Cys-272, Cys-267-Cys-285, Cys-279-Cys-294, Cys-301-Cys-327, and Cys-354-Cys-377. Residues 301–414 (CGGNLTGLQG…GGFSATYLAF (114 aa)) enclose the CUB 2 domain. N-linked (GlcNAc...) asparagine glycosylation is present at Asn-415. The LDL-receptor class A 2 domain occupies 420–455 (PCGPSELSCQAGGCKGVQWMCDMWRDCTDGSDDNCS). Disulfide bonds link Cys-421–Cys-433, Cys-428–Cys-446, Cys-440–Cys-454, Cys-466–Cys-528, Cys-474–Cys-521, Cys-512–Cys-549, Cys-538–Cys-576, and Cys-542–Cys-564. The FZ domain occupies 461 to 579 (PPELACEPVQ…AADLEACAQP (119 aa)).

In terms of assembly, interacts with C1QTNF5. In terms of tissue distribution, specifically expressed in brain. Strongly expressed in medulla oblongata and to a lower extent in hippocampus and corpus callosum. Expressed in keratinocytes.

The protein resides in the apical cell membrane. May play a role in eye development. This Homo sapiens (Human) protein is Membrane frizzled-related protein (MFRP).